The sequence spans 125 residues: Large ribosomal subunit protein bL17 (125 aa).

The protein belongs to the bacterial ribosomal protein bL17 family. In terms of assembly, part of the 50S ribosomal subunit. Contacts protein L32.

The polypeptide is Large ribosomal subunit protein bL17 (Acinetobacter baumannii (strain AB0057)).